Here is a 413-residue protein sequence, read N- to C-terminus: Arogenate dehydratase/prephenate dehydratase 6, chloroplastic (413 aa).

The N-terminal 44 residues, 1-44 (MKALSSSSPILGASQPATATALIARSGRSEWQSSCAILTSKVIS), are a transit peptide targeting the chloroplast. Residues 117-294 (RVAYQGVPGA…NVTRFVMLAR (178 aa)) enclose the Prephenate dehydratase domain. The ACT domain maps to 308 to 399 (SIVFAHEKGT…SFLRVLGSYP (92 aa)).

As to expression, expressed in roots, leaves, stems, flowers and siliques.

The protein resides in the plastid. The protein localises to the chloroplast stroma. It carries out the reaction L-arogenate + H(+) = L-phenylalanine + CO2 + H2O. It catalyses the reaction prephenate + H(+) = 3-phenylpyruvate + CO2 + H2O. It participates in amino-acid biosynthesis; L-phenylalanine biosynthesis; L-phenylalanine from L-arogenate: step 1/1. The protein operates within amino-acid biosynthesis; L-phenylalanine biosynthesis; phenylpyruvate from prephenate: step 1/1. Its function is as follows. Converts the prephenate produced from the shikimate-chorismate pathway into phenylalanine. Dehydratase that uses arogenate and prephenate as substrates. Utilzes more efficiently arogenate than prephenate. The protein is Arogenate dehydratase/prephenate dehydratase 6, chloroplastic of Arabidopsis thaliana (Mouse-ear cress).